A 496-amino-acid polypeptide reads, in one-letter code: Aspartyl/glutamyl-tRNA(Asn/Gln) amidotransferase subunit B (496 aa).

It belongs to the GatB/GatE family. GatB subfamily. As to quaternary structure, heterotrimer of A, B and C subunits.

It catalyses the reaction L-glutamyl-tRNA(Gln) + L-glutamine + ATP + H2O = L-glutaminyl-tRNA(Gln) + L-glutamate + ADP + phosphate + H(+). The enzyme catalyses L-aspartyl-tRNA(Asn) + L-glutamine + ATP + H2O = L-asparaginyl-tRNA(Asn) + L-glutamate + ADP + phosphate + 2 H(+). In terms of biological role, allows the formation of correctly charged Asn-tRNA(Asn) or Gln-tRNA(Gln) through the transamidation of misacylated Asp-tRNA(Asn) or Glu-tRNA(Gln) in organisms which lack either or both of asparaginyl-tRNA or glutaminyl-tRNA synthetases. The reaction takes place in the presence of glutamine and ATP through an activated phospho-Asp-tRNA(Asn) or phospho-Glu-tRNA(Gln). The sequence is that of Aspartyl/glutamyl-tRNA(Asn/Gln) amidotransferase subunit B from Nitrosospira multiformis (strain ATCC 25196 / NCIMB 11849 / C 71).